A 191-amino-acid chain; its full sequence is Small ribosomal subunit protein uS5 (191 aa).

The segment at 1 to 20 (MAGERERGGRERSRDREERD) is disordered. Residues 23-86 (FVDKLVHINR…ESAKRNLTRV (64 aa)) enclose the S5 DRBM domain.

The protein belongs to the universal ribosomal protein uS5 family. Part of the 30S ribosomal subunit. Contacts proteins S4 and S8.

With S4 and S12 plays an important role in translational accuracy. In terms of biological role, located at the back of the 30S subunit body where it stabilizes the conformation of the head with respect to the body. The sequence is that of Small ribosomal subunit protein uS5 from Nitrobacter winogradskyi (strain ATCC 25391 / DSM 10237 / CIP 104748 / NCIMB 11846 / Nb-255).